The sequence spans 175 residues: Bifunctional protein PyrR (175 aa).

Residues 40–41 (TR), 102–110 (DDVLYTGRT), Arg-135, and Val-159 contribute to the substrate site. The PRPP-binding motif lies at 98–110 (VIIIDDVLYTGRT).

Belongs to the purine/pyrimidine phosphoribosyltransferase family. PyrR subfamily. In terms of assembly, homodimer and homohexamer; in equilibrium.

It catalyses the reaction UMP + diphosphate = 5-phospho-alpha-D-ribose 1-diphosphate + uracil. Its function is as follows. Regulates transcriptional attenuation of the pyrimidine nucleotide (pyr) operon by binding in a uridine-dependent manner to specific sites on pyr mRNA. This disrupts an antiterminator hairpin in the RNA and favors formation of a downstream transcription terminator, leading to a reduced expression of downstream genes. Functionally, also displays a weak uracil phosphoribosyltransferase activity which is not physiologically significant. The protein is Bifunctional protein PyrR of Staphylococcus aureus (strain MSSA476).